Reading from the N-terminus, the 377-residue chain is MKRDYYEVLGVSKSADEQEIKKAYRKLARQYHPDVNPGDKDAEEKFKEATEAYDVLSDTEKRARYDQMGHSAFDPNQQGFGGFGGDFGGFGDIFDMFFGGGGGGGQRRQGPTRGNDLRYDLTITFEEAAFGTEKEIQVPRQETCTECHGSGSAPGTHPTTCSQCHGTGQVKATQRTPFGAIQTARTCPACNGSGQFISSPCKECSGKGTTRKVKTIKVTVPPGSEDGLNLRFSGNGEAGLRGGPSGDLYVVLNVKAHKFFEREGNDVYCEIPITFVQAALGSELDVPTLDGKVKMKIPEGTQTATVFRLRGHGIPYRRGNGRGDQHVRVVVATPTKLTDRQKELLREFGEVTSDQQQMGKKSFFEKVKENIRDAIDL.

The region spanning 4 to 69 (DYYEVLGVSK…EKRARYDQMG (66 aa)) is the J domain. The segment at 131–213 (GTEKEIQVPR…CSGKGTTRKV (83 aa)) adopts a CR-type zinc-finger fold. Zn(2+)-binding residues include Cys-144, Cys-147, Cys-161, Cys-164, Cys-187, Cys-190, Cys-201, and Cys-204. CXXCXGXG motif repeat units follow at residues 144–151 (CTECHGSG), 161–168 (CSQCHGTG), 187–194 (CPACNGSG), and 201–208 (CKECSGKG).

This sequence belongs to the DnaJ family. In terms of assembly, homodimer. The cofactor is Zn(2+).

It is found in the cytoplasm. Its function is as follows. Participates actively in the response to hyperosmotic and heat shock by preventing the aggregation of stress-denatured proteins and by disaggregating proteins, also in an autonomous, DnaK-independent fashion. Unfolded proteins bind initially to DnaJ; upon interaction with the DnaJ-bound protein, DnaK hydrolyzes its bound ATP, resulting in the formation of a stable complex. GrpE releases ADP from DnaK; ATP binding to DnaK triggers the release of the substrate protein, thus completing the reaction cycle. Several rounds of ATP-dependent interactions between DnaJ, DnaK and GrpE are required for fully efficient folding. Also involved, together with DnaK and GrpE, in the DNA replication of plasmids through activation of initiation proteins. The polypeptide is Chaperone protein DnaJ (Desulfitobacterium hafniense (strain DSM 10664 / DCB-2)).